The following is a 59-amino-acid chain: UPF0434 protein Rsph17029_0141 (59 aa).

The protein belongs to the UPF0434 family.

The chain is UPF0434 protein Rsph17029_0141 from Cereibacter sphaeroides (strain ATCC 17029 / ATH 2.4.9) (Rhodobacter sphaeroides).